A 142-amino-acid chain; its full sequence is Large ribosomal subunit protein uL13 (142 aa).

The protein belongs to the universal ribosomal protein uL13 family. In terms of assembly, part of the 50S ribosomal subunit.

Functionally, this protein is one of the early assembly proteins of the 50S ribosomal subunit, although it is not seen to bind rRNA by itself. It is important during the early stages of 50S assembly. The sequence is that of Large ribosomal subunit protein uL13 from Janthinobacterium sp. (strain Marseille) (Minibacterium massiliensis).